We begin with the raw amino-acid sequence, 315 residues long: Methionyl-tRNA formyltransferase (315 aa).

113-116 (SLLP) contacts (6S)-5,6,7,8-tetrahydrofolate.

This sequence belongs to the Fmt family.

The enzyme catalyses L-methionyl-tRNA(fMet) + (6R)-10-formyltetrahydrofolate = N-formyl-L-methionyl-tRNA(fMet) + (6S)-5,6,7,8-tetrahydrofolate + H(+). In terms of biological role, attaches a formyl group to the free amino group of methionyl-tRNA(fMet). The formyl group appears to play a dual role in the initiator identity of N-formylmethionyl-tRNA by promoting its recognition by IF2 and preventing the misappropriation of this tRNA by the elongation apparatus. The polypeptide is Methionyl-tRNA formyltransferase (Edwardsiella ictaluri (strain 93-146)).